The primary structure comprises 351 residues: Outer membrane porin protein 32 (351 aa).

The first 19 residues, Met-1–Ala-19, serve as a signal peptide directing secretion. The residue at position 20 (Gln-20) is a Pyrrolidone carboxylic acid.

This sequence to bacterial outer membrane proteins and porins. Homotrimer.

It localises to the cell outer membrane. Forms anion selective channels. The sequence is that of Outer membrane porin protein 32 (omp32) from Delftia acidovorans (Pseudomonas acidovorans).